Consider the following 213-residue polypeptide: CASP-like protein 2A1 (213 aa).

Over 1 to 41 (MSKMAEEKAAAVGGLGGAGAADAAQQQQLAAGEAAAARVRP) the chain is Cytoplasmic. The chain crosses the membrane as a helical span at residues 42–62 (VETLLRAAPLGLCVAAMTVML). The Extracellular portion of the chain corresponds to 63–83 (RNQQSNEYGAVAYSDLGGFKY). The helical transmembrane segment at 84–104 (LVYANGLCAAYSLVSAFYTAV) threads the bilayer. The Cytoplasmic segment spans residues 105 to 113 (PRPATVSRS). A helical membrane pass occupies residues 114-134 (WLVFLLDQVFTYLILAAGAAA). Over 135-166 (AELLYLAYNGDKEVTWSEACGVFGSFCRQART) the chain is Extracellular. Residues 167 to 187 (SVAITFGTVLCFILLSLISSY) traverse the membrane as a helical segment. The Cytoplasmic portion of the chain corresponds to 188 to 213 (RLFSAYEAPPSSALGSKGVEIAAYPR).

Belongs to the Casparian strip membrane proteins (CASP) family. Homodimer and heterodimers.

The protein resides in the cell membrane. This is CASP-like protein 2A1 from Zea mays (Maize).